The following is a 208-amino-acid chain: V-type ATP synthase subunit D (208 aa).

Belongs to the V-ATPase D subunit family.

Its function is as follows. Produces ATP from ADP in the presence of a proton gradient across the membrane. The polypeptide is V-type ATP synthase subunit D (Chlamydia caviae (strain ATCC VR-813 / DSM 19441 / 03DC25 / GPIC) (Chlamydophila caviae)).